We begin with the raw amino-acid sequence, 130 residues long: Small ribosomal subunit protein uS8 (130 aa).

It belongs to the universal ribosomal protein uS8 family. Part of the 30S ribosomal subunit.

Functionally, one of the primary rRNA binding proteins, it binds directly to 16S rRNA central domain where it helps coordinate assembly of the platform of the 30S subunit. The polypeptide is Small ribosomal subunit protein uS8 (Haloarcula marismortui (strain ATCC 43049 / DSM 3752 / JCM 8966 / VKM B-1809) (Halobacterium marismortui)).